The sequence spans 508 residues: MFS-type transporter penM (508 aa).

The tract at residues 1-60 (MKDGEETPSVDGSTSASNREKLGTDLEIGPVDLSDGGKEEKVKDPNLVDWDGPDDPENPL) is disordered. Residues 35 to 46 (DGGKEEKVKDPN) are compositionally biased toward basic and acidic residues. N-linked (GlcNAc...) asparagine glycosylation is present at N61. A helical membrane pass occupies residues 73–93 (SIALITFLTPLGSSMFAPGVG). N100 is a glycosylation site (N-linked (GlcNAc...) asparagine). Helical transmembrane passes span 108 to 128 (SFVV…IAPL), 143 to 163 (ILYV…SLVV), 166 to 186 (FFAG…IADM), 197 to 217 (AAWA…GAYL), 225 to 245 (WSFY…LFSI), and 299 to 319 (PIVF…YLLF). The Peroxisomal targeting signal motif lies at 293 to 307 (KMLFRSPIVFLLSLY). N-linked (GlcNAc...) asparagine glycosylation occurs at N331. A run of 5 helical transmembrane segments spans residues 335 to 355 (GAVG…LFLI), 379 to 399 (LPPM…YGWT), 407 to 427 (IVPI…FMCV), 435 to 457 (FTNY…GALL), and 475 to 495 (SLLG…WIYG).

It belongs to the major facilitator superfamily.

Its subcellular location is the peroxisome membrane. In terms of biological role, MFS-type transporter involved in penicillin production, most likely through the translocation of isopenicillin N from the cytosol to the peroxisomal lumen across the peroxisomal membrane. This chain is MFS-type transporter penM, found in Penicillium rubens (strain ATCC 28089 / DSM 1075 / NRRL 1951 / Wisconsin 54-1255) (Penicillium chrysogenum).